The chain runs to 74 residues: uncharacterized protein (74 aa).

Positions 39-74 are disordered; sequence SSPQAPGTLKPRALVRPSPGPVQENHLSEAQFPPKL.

This is an uncharacterized protein from Homo sapiens (Human).